The sequence spans 374 residues: 4-galactosyl-N-acetylglucosaminide 3-alpha-L-fucosyltransferase FUT5 (374 aa).

Residues 1-15 are Cytoplasmic-facing; it reads MDLLGAAKPQWPWRR. A helical; Signal-anchor for type II membrane protein membrane pass occupies residues 16–34; sequence CLAGLLFQLLVAVCFFSYL. The Lumenal segment spans residues 35–374; that stretch reads RVSRDDATGS…TVRSIAAWFN (340 aa). 4 N-linked (GlcNAc...) asparagine glycosylation sites follow: Asn60, Asn105, Asn167, and Asn198.

The protein belongs to the glycosyltransferase 10 family.

The protein resides in the golgi apparatus. Its subcellular location is the golgi stack membrane. The catalysed reaction is a beta-D-galactosyl-(1-&gt;3)-N-acetyl-beta-D-glucosaminyl derivative + GDP-beta-L-fucose = a beta-D-galactosyl-(1-&gt;3)-[alpha-L-fucosyl-(1-&gt;4)]-N-acetyl-beta-D-glucosaminyl derivative + GDP + H(+). The enzyme catalyses an N-acetyl-alpha-neuraminyl-(2-&gt;3)-beta-D-galactosyl-(1-&gt;4)-N-acetyl-beta-D-glucosaminyl derivative + GDP-beta-L-fucose = an alpha-Neu5Ac-(2-&gt;3)-beta-D-Gal-(1-&gt;4)-[alpha-L-Fuc-(1-&gt;3)]-beta-D-GlcNAc derivative + GDP + H(+). It carries out the reaction an alpha-Neu5Ac-(2-&gt;3)-beta-D-Gal-(1-&gt;4)-beta-D-GlcNAc-(1-&gt;3)-beta-D-Gal-(1-&gt;4)-[alpha-L-Fuc-(1-&gt;3)]-beta-D-GlcNAc derivative + GDP-beta-L-fucose = an alpha-Neu5Ac-(2-&gt;3)-beta-D-Gal-(1-&gt;4)-[alpha-L-Fuc-(1-&gt;3)]-beta-D-GlcNAc-(1-&gt;3)-beta-D-Gal-(1-&gt;4)-[alpha-L-Fuc-(1-&gt;3)]-beta-D-GlcNAc derivative + GDP + H(+). It catalyses the reaction a beta-D-galactosyl-(1-&gt;4)-N-acetyl-beta-D-glucosaminyl derivative + GDP-beta-L-fucose = a beta-D-galactosyl-(1-&gt;4)-[alpha-L-fucosyl-(1-&gt;3)]-N-acetyl-beta-D-glucosaminyl derivative + GDP + H(+). The catalysed reaction is a neolactoside nLc4Cer + GDP-beta-L-fucose = a neolactoside III(3)-alpha-Fuc-nLc4Cer + GDP + H(+). The enzyme catalyses a neolactoside nLc6Cer + GDP-beta-L-fucose = beta-D-galactosyl-(1-&gt;4)-N-acetyl-beta-D-glucosaminyl-(1-&gt;3)-beta-D-galactosyl-(1-&gt;4)-[alpha-L-fucosyl-(1-&gt;3)]-N-acetyl-beta-D-glucosaminyl-(1-&gt;3)-beta-D-galactosyl-(1-&gt;4)-beta-D-glucosyl-(1&lt;-&gt;1')-ceramide + GDP + H(+). It carries out the reaction a neolactoside nLc6Cer(d18:1(4E)) + GDP-beta-L-fucose = a neolactoside III(3)-alpha-Fuc-nLc6Cer(d18:1(4E)) + GDP + H(+). It catalyses the reaction a neolactoside nLc4Cer(d18:1(4E)) + GDP-beta-L-fucose = a neolactoside III(3)-alpha-Fuc-nLc4Cer(d18:1(4E)) + GDP + H(+). The catalysed reaction is a neolactoside VI(3)-alpha-NeuNAc-nLc6Cer + GDP-beta-L-fucose = a neolactoside VI(3)-alpha-NeuAc,III(3)-alphaFuc-nLc6Cer + GDP + H(+). The enzyme catalyses beta-D-galactosyl-(1-&gt;4)-N-acetyl-D-glucosamine + GDP-beta-L-fucose = beta-D-galactosyl-(1-&gt;4)-[alpha-L-fucosyl-(1-&gt;3)]-N-acetyl-D-glucosamine + GDP + H(+). It carries out the reaction N-acetyl-alpha-neuraminosyl-(2-&gt;3)-beta-D-galactosyl-(1-&gt;4)-N-acetyl-beta-D-glucosamine + GDP-beta-L-fucose = N-acetyl-alpha-neuraminosyl-(2-&gt;3)-beta-D-galactosyl-(1-&gt;4)-[alpha-L-fucosyl-(1-&gt;3)]-N-acetyl-beta-D-glucosamine + GDP + H(+). It catalyses the reaction alpha-L-Fuc-(1-&gt;2)-beta-D-Gal-(1-&gt;4)-D-GlcNAc + GDP-beta-L-fucose = alpha-L-Fuc-(1-&gt;2)-beta-D-Gal-(1-&gt;4)-[alpha-L-Fuc-(1-&gt;3)]-D-GlcNAc + GDP + H(+). The catalysed reaction is an alpha-Neu5Ac-(2-&gt;3)-beta-D-Gal-(1-&gt;3)-D-GlcNAc derivative + GDP-beta-L-fucose = an alpha-Neu5Ac-(2-&gt;3)-beta-D-Gal-(1-&gt;3)-[alpha-L-Fuc-(1-&gt;4)]-beta-D-GlcNAc derivative + GDP + H(+). It participates in protein modification; protein glycosylation. Catalyzes preferentially the transfer of L-fucose, from a guanosine diphosphate-beta-L-fucose, to the N-acetyl-beta-D-glucosamine (GlcNAc) of an N-acetyllactosamine unit (type 2 chain) of an oligosaccharide, or a glycoprotein- and a glycolipid-linked N-acetyllactosamine unit via an alpha (1,3) linkage and participates in the surface expression of VIM-2, Lewis X/SSEA-1 and sialyl Lewis X antigens. Preferentially transfers fucose to the GlcNAc of an internal N-acetyllactosamine unit of a poly-N-acetyllactosamine chain acceptor substrate. Also catalyzes to a lesser extend the transfer of L-fucose to the GlcNAc of a type 1 (beta-D-galactosyl-(1-&gt;3)-N-acetyl-beta-D-glucosaminyl) or H-type 1 (alpha-L-Fuc-(1-&gt;2)-beta-D-Gal-(1-&gt;3)-D-GlcNAc) chain oligosaccharide via an alpha (1,4) linkage. Preferentially catalyzes sialylated type 2 oligosaccharide acceptors over neutral type 2 or H type 2 (alpha-L-Fuc-(1-&gt;2)-beta-D-Gal-(1-&gt;4)-D-GlcNAc) oligosaccharide acceptors. Lactose-based structures are also acceptor substrates. This is 4-galactosyl-N-acetylglucosaminide 3-alpha-L-fucosyltransferase FUT5 from Hylobates lar (Lar gibbon).